Reading from the N-terminus, the 164-residue chain is UPF0114 protein YqhA (164 aa).

3 helical membrane passes run 10-32, 53-75, and 136-155; these read YASRWLLAPVYFGLSLALVALAL, LILVLLSLVDMTLVGGLLVMVMF, and LMWYVIIHLTFVLSAFVMGY.

Belongs to the UPF0114 family.

The protein resides in the cell membrane. In Shigella flexneri, this protein is UPF0114 protein YqhA.